A 96-amino-acid chain; its full sequence is Prokineticin Bm8-e (96 aa).

The N-terminal stretch at 1-19 (MKCFAQIVVLLLVIAFSHG) is a signal peptide. 5 cysteine pairs are disulfide-bonded: cysteine 26/cysteine 38, cysteine 32/cysteine 50, cysteine 37/cysteine 78, cysteine 60/cysteine 86, and cysteine 80/cysteine 95.

This sequence belongs to the AVIT (prokineticin) family. In terms of tissue distribution, expressed by the skin glands.

It localises to the secreted. Its function is as follows. Potent agonist for both PKR1/PROKR1 and PKR2/PROKR2, and inducer of a potent and long-lasting hyperalgesia. Also potentiates capsaicin-induced TRPV1 current, when tested on DRG neurons. At subnanomolar concentrations, this protein both induces potent chemotaxis of macrophages and stimulates LPS-induced production of the pro-inflammatory cytokines IL-1 and IL-12. In vivo, potently stimulates the contraction of the guinea-pig gastrointestinal (GI) smooth muscle (nanomolar concentration). This is Prokineticin Bm8-e from Bombina maxima (Giant fire-bellied toad).